We begin with the raw amino-acid sequence, 226 residues long: Protein B (226 aa).

The segment at 37–100 (DNVQGTDYEK…FSTQHLANKV (64 aa)) is igG constant region-binding. 3 consecutive repeats follow at residues 158–168 (TKSKLDKEIWN), 169–179 (TRFTRDKKVLN), and 180–190 (VKEFKVYNTLN).

It is found in the secreted. Functionally, protein B belongs to the group of bacterial Fc-binding protein. This is Protein B from Streptococcus agalactiae.